We begin with the raw amino-acid sequence, 855 residues long: Envelope glycoprotein gp160 (855 aa).

The signal sequence occupies residues 1–31 (MTARGTRKNYQRLWRWGTMLLGMLMICSAAE). Residues 32–683 (NLWVTVYYGV…ITNWLWYIRI (652 aa)) lie on the Extracellular side of the membrane. Cysteines 53 and 73 form a disulfide. 17 N-linked (GlcNAc...) asparagine; by host glycosylation sites follow: Asn-87, Asn-134, Asn-142, Asn-145, Asn-161, Asn-165, Asn-192, Asn-202, Asn-239, Asn-246, Asn-267, Asn-281, Asn-294, Asn-300, Asn-306, Asn-336, and Asn-359. Intrachain disulfides connect Cys-118–Cys-210, Cys-125–Cys-201, Cys-130–Cys-162, Cys-223–Cys-252, and Cys-233–Cys-244. The segment at 130 to 161 (CTDVNTTSSSLRNATNTTSSSWETMEKGELKN) is V1. Positions 162–201 (CSFNTTTSIRDKMQEQYALFYKLDVLPIDKNDTKFRLIHC) are V2. The tract at residues 301–334 (CTRPNNNTRNRISIGPGRAFHTTKQIIGDIRQAH) is V3. Cys-301 and Cys-335 form a disulfide bridge. The segment at 367 to 377 (SSGGDPEIVMH) is CD4-binding loop. Intrachain disulfides connect Cys-381/Cys-442 and Cys-388/Cys-415. The tract at residues 388 to 415 (CNTSQLFNSTWNDTTRANSTEVTITLPC) is V4. N-linked (GlcNAc...) asparagine; by host glycans are attached at residues Asn-389, Asn-395, Asn-399, Asn-405, and Asn-458. 2 V5 regions span residues 458-469 (NTTNGIEIFRPA) and 460-469 (TNGIEIFRPA). Residues 510 to 531 (AVGMLGAMFLGFLGAAGSTMGA) are fusion peptide. Residues 573–591 (KQLQARVLAVERYLKDQQL) form an immunosuppression region. Cysteines 597 and 603 form a disulfide. N-linked (GlcNAc...) asparagine; by host glycans are attached at residues Asn-610, Asn-615, Asn-624, and Asn-636. Residues 632–666 (REIDNYTHLIYTLIEESQNQQEKNEQELLELDKWA) adopt a coiled-coil conformation. Residues 661-682 (ELDKWAGLWSWFSITNWLWYIR) form an MPER; binding to GalCer region. A helical transmembrane segment spans residues 684–704 (FIIIVGGLVGLRIVFAVLSIV). Residues 705–855 (NRVRQGYSPL…IRQGLERALL (151 aa)) are Cytoplasmic-facing. The YXXL motif; contains endocytosis signal signature appears at 711-714 (YSPL). Positions 718–742 (TRLPTQRGPDRPEGIEEEGGERDRD) are disordered. Cys-763 is lipidated: S-palmitoyl cysteine; by host. Positions 854 to 855 (LL) match the Di-leucine internalization motif motif.

This sequence belongs to the HIV-1 env protein family. In terms of assembly, the mature envelope protein (Env) consists of a homotrimer of non-covalently associated gp120-gp41 heterodimers. The resulting complex protrudes from the virus surface as a spike. There seems to be as few as 10 spikes on the average virion. Interacts with host CD4, CCR5 and CXCR4. Gp120 also interacts with the C-type lectins CD209/DC-SIGN and CLEC4M/DC-SIGNR (collectively referred to as DC-SIGN(R)). Gp120 and gp41 interact with GalCer. Gp120 interacts with host ITGA4/ITGB7 complex; on CD4+ T-cells, this interaction results in rapid activation of integrin ITGAL/LFA-1, which facilitates efficient cell-to-cell spreading of HIV-1. Gp120 interacts with cell-associated heparan sulfate; this interaction increases virus infectivity on permissive cells and may be involved in infection of CD4- cells. The mature envelope protein (Env) consists of a homotrimer of non-covalently associated gp120-gp41 heterodimers. The resulting complex protrudes from the virus surface as a spike. There seems to be as few as 10 spikes on the average virion. In terms of processing, highly glycosylated by host. The high number of glycan on the protein is reffered to as 'glycan shield' because it contributes to hide protein sequence from adaptive immune system. Palmitoylation of the transmembrane protein and of Env polyprotein (prior to its proteolytic cleavage) is essential for their association with host cell membrane lipid rafts. Palmitoylation is therefore required for envelope trafficking to classical lipid rafts, but not for viral replication. Post-translationally, specific enzymatic cleavages in vivo yield mature proteins. Envelope glycoproteins are synthesized as an inactive precursor that is heavily N-glycosylated and processed likely by host cell furin in the Golgi to yield the mature SU and TM proteins. The cleavage site between SU and TM requires the minimal sequence [KR]-X-[KR]-R. About 2 of the 9 disulfide bonds of gp41 are reduced by P4HB/PDI, following binding to CD4 receptor.

It localises to the virion membrane. Its subcellular location is the host cell membrane. The protein localises to the host endosome membrane. Functionally, oligomerizes in the host endoplasmic reticulum into predominantly trimers. In a second time, gp160 transits in the host Golgi, where glycosylation is completed. The precursor is then proteolytically cleaved in the trans-Golgi and thereby activated by cellular furin or furin-like proteases to produce gp120 and gp41. In terms of biological role, attaches the virus to the host lymphoid cell by binding to the primary receptor CD4. This interaction induces a structural rearrangement creating a high affinity binding site for a chemokine coreceptor like CXCR4 and/or CCR5. Acts as a ligand for CD209/DC-SIGN and CLEC4M/DC-SIGNR, which are respectively found on dendritic cells (DCs), and on endothelial cells of liver sinusoids and lymph node sinuses. These interactions allow capture of viral particles at mucosal surfaces by these cells and subsequent transmission to permissive cells. HIV subverts the migration properties of dendritic cells to gain access to CD4+ T-cells in lymph nodes. Virus transmission to permissive T-cells occurs either in trans (without DCs infection, through viral capture and transmission), or in cis (following DCs productive infection, through the usual CD4-gp120 interaction), thereby inducing a robust infection. In trans infection, bound virions remain infectious over days and it is proposed that they are not degraded, but protected in non-lysosomal acidic organelles within the DCs close to the cell membrane thus contributing to the viral infectious potential during DCs' migration from the periphery to the lymphoid tissues. On arrival at lymphoid tissues, intact virions recycle back to DCs' cell surface allowing virus transmission to CD4+ T-cells. Its function is as follows. Acts as a class I viral fusion protein. Under the current model, the protein has at least 3 conformational states: pre-fusion native state, pre-hairpin intermediate state, and post-fusion hairpin state. During fusion of viral and target intracellular membranes, the coiled coil regions (heptad repeats) assume a trimer-of-hairpins structure, positioning the fusion peptide in close proximity to the C-terminal region of the ectodomain. The formation of this structure appears to drive apposition and subsequent fusion of viral and target cell membranes. Complete fusion occurs in host cell endosomes and is dynamin-dependent, however some lipid transfer might occur at the plasma membrane. The virus undergoes clathrin-dependent internalization long before endosomal fusion, thus minimizing the surface exposure of conserved viral epitopes during fusion and reducing the efficacy of inhibitors targeting these epitopes. Membranes fusion leads to delivery of the nucleocapsid into the cytoplasm. This Homo sapiens (Human) protein is Envelope glycoprotein gp160.